A 169-amino-acid chain; its full sequence is MATVKKKLDAGQFNLKDQVVAINRVTKVVKGGKNLSFAALVVVGDPSAAVVGYGSGKAKEVPQAIRKGIESAKKNLVKVNLSQTSIPHQVLGRYGSGRVMLKPAPEGTGVIAGGAVRAVMTSAGVQNVLTKSIGTTNPHNVIKATFEALKQLRDRREVAAGRGKTVEEL.

Residues 15 to 79 (LKDQVVAINR…ESAKKNLVKV (65 aa)) form the S5 DRBM domain.

The protein belongs to the universal ribosomal protein uS5 family. Part of the 30S ribosomal subunit. Contacts proteins S4 and S8.

Its function is as follows. With S4 and S12 plays an important role in translational accuracy. In terms of biological role, located at the back of the 30S subunit body where it stabilizes the conformation of the head with respect to the body. This chain is Small ribosomal subunit protein uS5, found in Koribacter versatilis (strain Ellin345).